The chain runs to 101 residues: Cell division protein FtsB (101 aa).

Topologically, residues 1 to 3 (MRI) are cytoplasmic. Residues 4-21 (VIYSMLVLLIAIQYPLWL) form a helical membrane-spanning segment. The Periplasmic portion of the chain corresponds to 22-101 (GKGGWLKVYE…KSSDTQVTKQ (80 aa)). A coiled-coil region spans residues 33 to 53 (ERQVELQEAKNSLLALRNAKL).

This sequence belongs to the FtsB family. In terms of assembly, part of a complex composed of FtsB, FtsL and FtsQ.

The protein resides in the cell inner membrane. Essential cell division protein. May link together the upstream cell division proteins, which are predominantly cytoplasmic, with the downstream cell division proteins, which are predominantly periplasmic. This is Cell division protein FtsB from Polynucleobacter necessarius subsp. necessarius (strain STIR1).